Reading from the N-terminus, the 177-residue chain is Inorganic pyrophosphatase (177 aa).

3 residues coordinate substrate: Lys-30, Arg-44, and Tyr-56. Residues Asp-66, Asp-71, and Asp-103 each contribute to the Mg(2+) site. Tyr-142 is a substrate binding site.

The protein belongs to the PPase family. In terms of assembly, homohexamer. Mg(2+) is required as a cofactor.

Its subcellular location is the cytoplasm. The catalysed reaction is diphosphate + H2O = 2 phosphate + H(+). Functionally, catalyzes the hydrolysis of inorganic pyrophosphate (PPi) forming two phosphate ions. This is Inorganic pyrophosphatase from Agrobacterium fabrum (strain C58 / ATCC 33970) (Agrobacterium tumefaciens (strain C58)).